Reading from the N-terminus, the 177-residue chain is Large ribosomal subunit protein uL6 (177 aa).

Positions 157-177 (YKGKGVRYAGEKVRRKEGKKK) are disordered.

The protein belongs to the universal ribosomal protein uL6 family. As to quaternary structure, part of the 50S ribosomal subunit.

Its function is as follows. This protein binds to the 23S rRNA, and is important in its secondary structure. It is located near the subunit interface in the base of the L7/L12 stalk, and near the tRNA binding site of the peptidyltransferase center. This is Large ribosomal subunit protein uL6 from Caulobacter vibrioides (strain ATCC 19089 / CIP 103742 / CB 15) (Caulobacter crescentus).